A 93-amino-acid chain; its full sequence is Putative defensin-like protein 282 (93 aa).

The signal sequence occupies residues 1 to 25; it reads MANATSFIALAYLLASALMTTVVLG. Intrachain disulfides connect C51-C83, C66-C90, and C72-C92.

It belongs to the DEFL family.

Its subcellular location is the secreted. The polypeptide is Putative defensin-like protein 282 (Arabidopsis thaliana (Mouse-ear cress)).